Reading from the N-terminus, the 86-residue chain is MKTLLLSLVVVTIVCLDLGYTLTCLICPEKYCNKVHTCLNGEKICFKKYDQRKLLGKRYIRGCADTCPVRKPREIVECCSTDKCNH.

The first 21 residues, 1–21, serve as a signal peptide directing secretion; that stretch reads MKTLLLSLVVVTIVCLDLGYT. 5 cysteine pairs are disulfide-bonded: cysteine 24/cysteine 45, cysteine 27/cysteine 32, cysteine 38/cysteine 63, cysteine 67/cysteine 78, and cysteine 79/cysteine 84.

This sequence belongs to the three-finger toxin family. Ancestral subfamily. Orphan group II sub-subfamily. As to expression, expressed by the venom gland.

The protein resides in the secreted. Its function is as follows. Binds with low affinity to muscular (alpha-1-beta-1-delta-epsilon/CHRNA1-CHRNB1-CHRND-CHRNE) and very low affinity to neuronal (alpha-7/CHRNA7) nicotinic acetylcholine receptor (nAChR). This Naja atra (Chinese cobra) protein is Probable weak neurotoxin NNAM1.